Reading from the N-terminus, the 129-residue chain is Profilin-4 (129 aa).

It belongs to the profilin family. Expressed in testis, in germ cells in seminiferous tubules (at protein level).

The protein resides in the cytoplasm. Its function is as follows. Involved in male fertility. Required for manchette development and acrosome biogenesis during spermiogenesis. Binds in vitro to phospholipids, including phosphatidylinositol 3-phosphate (PtdIns(3)P), phosphatidylinositol 4,5-bisphosphate (PtdIns(4,5)P2), phosphatidylinositol 4-phosphate (PtdIns(4)P) and phosphatidic acid (PA). Contrary to other profilin family members, does not bind to actin in vitro. The chain is Profilin-4 (Pfn4) from Mus musculus (Mouse).